Consider the following 133-residue polypeptide: Small ribosomal subunit protein uS8c (133 aa).

It belongs to the universal ribosomal protein uS8 family. In terms of assembly, part of the 30S ribosomal subunit.

It is found in the plastid. The protein resides in the chloroplast. Functionally, one of the primary rRNA binding proteins, it binds directly to 16S rRNA central domain where it helps coordinate assembly of the platform of the 30S subunit. This is Small ribosomal subunit protein uS8c (rps8) from Mesostigma viride (Green alga).